The following is a 94-amino-acid chain: Pyrimidine/purine nucleoside phosphorylase (94 aa).

It belongs to the nucleoside phosphorylase PpnP family.

It catalyses the reaction a purine D-ribonucleoside + phosphate = a purine nucleobase + alpha-D-ribose 1-phosphate. It carries out the reaction adenosine + phosphate = alpha-D-ribose 1-phosphate + adenine. The enzyme catalyses cytidine + phosphate = cytosine + alpha-D-ribose 1-phosphate. The catalysed reaction is guanosine + phosphate = alpha-D-ribose 1-phosphate + guanine. It catalyses the reaction inosine + phosphate = alpha-D-ribose 1-phosphate + hypoxanthine. It carries out the reaction thymidine + phosphate = 2-deoxy-alpha-D-ribose 1-phosphate + thymine. The enzyme catalyses uridine + phosphate = alpha-D-ribose 1-phosphate + uracil. The catalysed reaction is xanthosine + phosphate = alpha-D-ribose 1-phosphate + xanthine. Functionally, catalyzes the phosphorolysis of diverse nucleosides, yielding D-ribose 1-phosphate and the respective free bases. Can use uridine, adenosine, guanosine, cytidine, thymidine, inosine and xanthosine as substrates. Also catalyzes the reverse reactions. This is Pyrimidine/purine nucleoside phosphorylase from Alcanivorax borkumensis (strain ATCC 700651 / DSM 11573 / NCIMB 13689 / SK2).